Consider the following 106-residue polypeptide: Cell division protein FtsB (106 aa).

The Cytoplasmic portion of the chain corresponds to 1–3; that stretch reads MGK. Residues 4–21 traverse the membrane as a helical segment; that stretch reads LTLLLLVLLGWLQYSLWL. Residues 22–106 are Periplasmic-facing; that stretch reads GKNGIHDYVR…SRPSTPNNTQ (85 aa). The stretch at 29-70 forms a coiled coil; sequence YVRVKNDVAMQERNNSKLKARNDQLSAEIDDLTGGQEAIEER.

Belongs to the FtsB family. In terms of assembly, part of a complex composed of FtsB, FtsL and FtsQ.

The protein resides in the cell inner membrane. Essential cell division protein. May link together the upstream cell division proteins, which are predominantly cytoplasmic, with the downstream cell division proteins, which are predominantly periplasmic. This chain is Cell division protein FtsB, found in Photorhabdus laumondii subsp. laumondii (strain DSM 15139 / CIP 105565 / TT01) (Photorhabdus luminescens subsp. laumondii).